We begin with the raw amino-acid sequence, 620 residues long: MRNSLLFFIFLPSTILAVDLIHLHDGSPLFGEEVLSQTGKPLTRFQGIPFAEPPVGNLRFKKPKPKQPWRIPLNATTPPNSCIQSEDTYFGDFYGSTMWNANTKLSEDCLYLNVYVPGKVDPNKKLAVMVWVYGGGFWSGTATLDVYDGRILTVEENVILVAMNYRVSIFGFLYMNRPEAPGNMGMWDQLLAMKWVHKNIDLFGGDLSRITLFGESAGAASVSIHMLSPKSAPYFHRAIIQSGSATSPWAIEPRDVALARAVILYNAMKCGNMSLINPDYDRILDCFQRADADALRENEWAPVREFGDFPWVPVVDGDFLLENAQTSLKQGNFKKTQLLAGSNRDESIYFLTYQLPDIFPVADFFTKTDFIKDRQLWIKGVKDLLPRQILKCQLTLAAVLHEYEPQDLPVTPRDWINAMDKMLGDYHFTCSVNEMALAHTKHGGDTYYYYFTHRASQQTWPEWMGVLHGYEINFIFGEPLNQKRFNYTDEERELSNRFMRYWANFAKTGDPNKNEDGSFTQDVWPKYNSVSMEYMNMTVESSYPSMKRIGHGPRRKECAFWKAYLPNLMAAVADVGDPYLVWKQQMDKWQNEYITDWQYHFEQYKRYQTYRQSDSETCGG.

The N-terminal stretch at 1–31 (MRNSLLFFIFLPSTILAVDLIHLHDGSPLFG) is a signal peptide. Asn-74 carries an N-linked (GlcNAc...) asparagine glycan. Cysteines 82 and 109 form a disulfide. Catalysis depends on Ser-216, which acts as the Acyl-ester intermediate. A disulfide bridge links Cys-270 with Cys-286. N-linked (GlcNAc...) asparagine glycosylation is present at Asn-272. Active-site charge relay system residues include Glu-346 and His-468. Cys-430 and Cys-558 are joined by a disulfide. N-linked (GlcNAc...) asparagine glycans are attached at residues Asn-486 and Asn-536.

Belongs to the type-B carboxylesterase/lipase family. As to quaternary structure, oligomer composed of disulfide-linked homodimers.

The protein resides in the synapse. It is found in the secreted. The protein localises to the cell membrane. It catalyses the reaction acetylcholine + H2O = choline + acetate + H(+). Its function is as follows. Rapidly hydrolyzes acetylcholine and releases choline into the synapse. It can hydrolyze propionylcholine and butyrylthiocholine in vitro. The protein is Acetylcholinesterase 1 (ace-1) of Caenorhabditis elegans.